We begin with the raw amino-acid sequence, 396 residues long: Glideosome-associated protein 50 (396 aa).

Residues 1–369 (MNYCKTTFHI…PMGNKDTFVR (369 aa)) lie on the Lumenal side of the membrane. A metal cation is bound by residues His-195 and His-256. Residues 370 to 390 (VVGTIGILIGSVIVFIGASSF) form a helical membrane-spanning segment. The Cytoplasmic portion of the chain corresponds to 391–396 (LSKNMK).

Belongs to the metallophosphoesterase superfamily. Purple acid phosphatase family. In terms of assembly, component of the glideosome complex composed of GAP50, GAP45, MTIP and MyoA; the complex is formed during the late schizont stage and in merozoites. MyoA, MTIP and GAP45 probably form an initial complex in the cytoplasm which is then recruited to the outer face of the inner membrane complex via the interaction with GAP50. Interacts with GAP45; the interaction is independent of GAP45 phosphorylation status and can also occur independently of the formation of the glideosome complex. Interacts with human factor H isoform CFH (via sushi 6-7 domains) and isoform FHL-1 (via sushi 6-7 domains); the interaction occurs in the vector mosquito midgut at the surface of activated gametocytes; the interaction protects the parasite from alternative complement pathway-mediated elimination. The cofactor is a metal cation. Post-translationally, the N-terminus signal is likely to be cleaved.

Its subcellular location is the inner membrane complex. The protein resides in the cell membrane. It localises to the endoplasmic reticulum membrane. It carries out the reaction a phosphate monoester + H2O = an alcohol + phosphate. Activity is independent of metal ions. Component of the glideosome complex, an inner membrane complex structure involved in parasite gliding motility and host cell invasion. During the asexual blood stage, may play a role in the assembly and anchoring of the glideosome complex to the inner membrane complex. During the sexual stage in the vector mosquito midgut, protects gametocytes against host alternative complement pathway-mediated elimination by interacting with host complement inhibitor factor H. Has phosphatase activity towards nucleotides such as ATP, vitamins B1 and B6, phosphorylated sugars, glycerol phosphates and inositol triphosphates. However, the phosphatase activity is controversial. The sequence is that of Glideosome-associated protein 50 from Plasmodium falciparum (isolate 3D7).